We begin with the raw amino-acid sequence, 316 residues long: Protein lifeguard 2 (316 aa).

The disordered stretch occupies residues 1–46 (MTQGKLSVANKAPGTEGQQQANGEKKETPAVPSAPPSYEEATSGEG). 3 helical membrane-spanning segments follow: residues 106–126 (VYTI…LFTF), 138–158 (PGWY…LACC), and 165–185 (FPWN…LTGM). N191 is a glycosylation site (N-linked (GlcNAc...) asparagine). 4 helical membrane-spanning segments follow: residues 194–214 (SVLL…VFSF), 225–245 (GVLF…AILL), 251–271 (PWLH…FLAF), and 290–310 (IFGA…FLQL).

Belongs to the BI1 family. LFG subfamily. In terms of assembly, interacts with FAS/TNFRSF6 and BAX.

It localises to the cell membrane. It is found in the membrane raft. The protein resides in the postsynaptic cell membrane. Functionally, antiapoptotic protein which protects cells uniquely from Fas-induced apoptosis. Regulates Fas-mediated apoptosis in neurons by interfering with caspase-8 activation. Plays a role in cerebellar development by affecting cerebellar size, internal granular layer (IGL) thickness, and Purkinje cell (PC) development. This is Protein lifeguard 2 (FAIM2) from Bos taurus (Bovine).